The sequence spans 347 residues: NADH-ubiquinone oxidoreductase chain 2 (347 aa).

A run of 10 helical transmembrane segments spans residues 3 to 23 (PPILIAILATVMTGTMIVMLS), 25 to 45 (HWLLIWIGFEMNMLAIIPILM), 66 to 86 (ASMLLMMGVTINLLYSGQWMI), 111 to 131 (FHFWVPEVTQGISLSSGMILL), 149 to 169 (INTDLMTLVALASVLVGGWGG), 178 to 198 (IMAYSSIAHMGWMAAIIIYNP), 201 to 221 (MFLNLSLYILMTLSTFMLFML), 237 to 257 (IPLIASTILTLMLSLGGLPPL), 274 to 294 (DMIVVPTLMAITALLNLYFYM), and 325 to 345 (LLPPLIITSTMLLPIMPMMSI).

It belongs to the complex I subunit 2 family. Core subunit of respiratory chain NADH dehydrogenase (Complex I) which is composed of 45 different subunits. Interacts with TMEM242.

It localises to the mitochondrion inner membrane. The enzyme catalyses a ubiquinone + NADH + 5 H(+)(in) = a ubiquinol + NAD(+) + 4 H(+)(out). Core subunit of the mitochondrial membrane respiratory chain NADH dehydrogenase (Complex I) which catalyzes electron transfer from NADH through the respiratory chain, using ubiquinone as an electron acceptor. Essential for the catalytic activity and assembly of complex I. The sequence is that of NADH-ubiquinone oxidoreductase chain 2 from Vulpes vulpes (Red fox).